Reading from the N-terminus, the 450-residue chain is Methylenetetrahydrofolate--tRNA-(uracil-5-)-methyltransferase TrmFO (450 aa).

Position 10-15 (10-15 (GGGLAG)) interacts with FAD.

The protein belongs to the MnmG family. TrmFO subfamily. Requires FAD as cofactor.

The protein localises to the cytoplasm. It carries out the reaction uridine(54) in tRNA + (6R)-5,10-methylene-5,6,7,8-tetrahydrofolate + NADH + H(+) = 5-methyluridine(54) in tRNA + (6S)-5,6,7,8-tetrahydrofolate + NAD(+). The enzyme catalyses uridine(54) in tRNA + (6R)-5,10-methylene-5,6,7,8-tetrahydrofolate + NADPH + H(+) = 5-methyluridine(54) in tRNA + (6S)-5,6,7,8-tetrahydrofolate + NADP(+). Its function is as follows. Catalyzes the folate-dependent formation of 5-methyl-uridine at position 54 (M-5-U54) in all tRNAs. The chain is Methylenetetrahydrofolate--tRNA-(uracil-5-)-methyltransferase TrmFO from Anaeromyxobacter dehalogenans (strain 2CP-C).